Reading from the N-terminus, the 180-residue chain is uncharacterized protein (180 aa).

Residues 114 to 147 (EDIYEDIVDVRLENQSLEEQLEDFKECSRALKKY) are a coiled coil.

It belongs to the mimivirus L74/L77/R857 family.

This is an uncharacterized protein from Acanthamoeba polyphaga mimivirus (APMV).